The sequence spans 115 residues: Large ribosomal subunit protein bL20 (115 aa).

Belongs to the bacterial ribosomal protein bL20 family.

Its function is as follows. Binds directly to 23S ribosomal RNA and is necessary for the in vitro assembly process of the 50S ribosomal subunit. It is not involved in the protein synthesizing functions of that subunit. In Mycoplasmoides gallisepticum (strain R(low / passage 15 / clone 2)) (Mycoplasma gallisepticum), this protein is Large ribosomal subunit protein bL20.